We begin with the raw amino-acid sequence, 453 residues long: tRNA modification GTPase MnmE (453 aa).

The (6S)-5-formyl-5,6,7,8-tetrahydrofolate site is built by Arg-22, Glu-79, and Lys-119. A TrmE-type G domain is found at 215–376 (GMKVVIAGRP…LRNHLKECMG (162 aa)). Asn-225 provides a ligand contact to K(+). Residues 225–230 (NAGKSS), 244–250 (TDIAGTT), 269–272 (DTAG), and 334–337 (NKAD) each bind GTP. Residue Ser-229 participates in Mg(2+) binding. K(+)-binding residues include Thr-244, Ile-246, and Thr-249. Thr-250 contributes to the Mg(2+) binding site. A (6S)-5-formyl-5,6,7,8-tetrahydrofolate-binding site is contributed by Lys-453.

This sequence belongs to the TRAFAC class TrmE-Era-EngA-EngB-Septin-like GTPase superfamily. TrmE GTPase family. Homodimer. Heterotetramer of two MnmE and two MnmG subunits. It depends on K(+) as a cofactor.

Its subcellular location is the cytoplasm. In terms of biological role, exhibits a very high intrinsic GTPase hydrolysis rate. Involved in the addition of a carboxymethylaminomethyl (cmnm) group at the wobble position (U34) of certain tRNAs, forming tRNA-cmnm(5)s(2)U34. This chain is tRNA modification GTPase MnmE, found in Vibrio vulnificus (strain YJ016).